The sequence spans 190 residues: RING finger protein 227 (190 aa).

An RING-type zinc finger spans residues 18–81 (CNICFRPYNL…RRAVTCPFCR (64 aa)). Residues 108–147 (ARAEREGDPMGSPAKDSGEDGEDDDGEAESEKGAGPPSAG) are disordered. Residues 126–135 (EDGEDDDGEA) are compositionally biased toward acidic residues.

This Mus musculus (Mouse) protein is RING finger protein 227.